A 147-amino-acid chain; its full sequence is D-aminoacyl-tRNA deacylase (147 aa).

The Gly-cisPro motif, important for rejection of L-amino acids motif lies at 136–137; it reads GP.

The protein belongs to the DTD family. In terms of assembly, homodimer.

It is found in the cytoplasm. It catalyses the reaction glycyl-tRNA(Ala) + H2O = tRNA(Ala) + glycine + H(+). It carries out the reaction a D-aminoacyl-tRNA + H2O = a tRNA + a D-alpha-amino acid + H(+). Its function is as follows. An aminoacyl-tRNA editing enzyme that deacylates mischarged D-aminoacyl-tRNAs. Also deacylates mischarged glycyl-tRNA(Ala), protecting cells against glycine mischarging by AlaRS. Acts via tRNA-based rather than protein-based catalysis; rejects L-amino acids rather than detecting D-amino acids in the active site. By recycling D-aminoacyl-tRNA to D-amino acids and free tRNA molecules, this enzyme counteracts the toxicity associated with the formation of D-aminoacyl-tRNA entities in vivo and helps enforce protein L-homochirality. The sequence is that of D-aminoacyl-tRNA deacylase from Streptococcus dysgalactiae subsp. equisimilis (Streptococcus equisimilis).